The following is a 138-amino-acid chain: Large ribosomal subunit protein uL16 (138 aa).

Residues 1–16 (MLIPRRVKHRKQHHPS) show a composition bias toward basic residues. Residues 1-25 (MLIPRRVKHRKQHHPSRSGAAKGGT) form a disordered region.

This sequence belongs to the universal ribosomal protein uL16 family. Part of the 50S ribosomal subunit.

Its function is as follows. Binds 23S rRNA and is also seen to make contacts with the A and possibly P site tRNAs. This chain is Large ribosomal subunit protein uL16, found in Rhodococcus erythropolis (strain PR4 / NBRC 100887).